We begin with the raw amino-acid sequence, 185 residues long: Ribosome-recycling factor (185 aa).

A disordered region spans residues 163–185; that stretch reads LTNEATKKIDAISKDKEKEITEG. The segment covering 167 to 185 has biased composition (basic and acidic residues); it reads ATKKIDAISKDKEKEITEG.

The protein belongs to the RRF family.

Its subcellular location is the cytoplasm. Responsible for the release of ribosomes from messenger RNA at the termination of protein biosynthesis. May increase the efficiency of translation by recycling ribosomes from one round of translation to another. This Latilactobacillus sakei subsp. sakei (strain 23K) (Lactobacillus sakei subsp. sakei) protein is Ribosome-recycling factor.